We begin with the raw amino-acid sequence, 277 residues long: Putative phosphoenolpyruvate synthase regulatory protein (277 aa).

Position 152 to 159 (152 to 159) interacts with ADP; the sequence is GVSRCGKT.

It belongs to the pyruvate, phosphate/water dikinase regulatory protein family. PSRP subfamily.

It catalyses the reaction [pyruvate, water dikinase] + ADP = [pyruvate, water dikinase]-phosphate + AMP + H(+). The catalysed reaction is [pyruvate, water dikinase]-phosphate + phosphate + H(+) = [pyruvate, water dikinase] + diphosphate. In terms of biological role, bifunctional serine/threonine kinase and phosphorylase involved in the regulation of the phosphoenolpyruvate synthase (PEPS) by catalyzing its phosphorylation/dephosphorylation. The sequence is that of Putative phosphoenolpyruvate synthase regulatory protein from Chromohalobacter salexigens (strain ATCC BAA-138 / DSM 3043 / CIP 106854 / NCIMB 13768 / 1H11).